The primary structure comprises 165 residues: 3-isopropylmalate dehydratase small subunit (165 aa).

This sequence belongs to the LeuD family. LeuD type 2 subfamily. As to quaternary structure, heterodimer of LeuC and LeuD.

It carries out the reaction (2R,3S)-3-isopropylmalate = (2S)-2-isopropylmalate. The protein operates within amino-acid biosynthesis; L-leucine biosynthesis; L-leucine from 3-methyl-2-oxobutanoate: step 2/4. Catalyzes the isomerization between 2-isopropylmalate and 3-isopropylmalate, via the formation of 2-isopropylmaleate. The polypeptide is 3-isopropylmalate dehydratase small subunit (Hydrogenobaculum sp. (strain Y04AAS1)).